A 267-amino-acid chain; its full sequence is Type II pantothenate kinase (267 aa).

6 to 13 contacts ATP; it reads DAGGTLIK. Glu70 acts as the Proton acceptor in catalysis. ATP contacts are provided by residues Thr99, 121 to 125, Tyr137, and Ser225; that span reads GGMIQ.

Belongs to the type II pantothenate kinase family. Homodimer.

Its subcellular location is the cytoplasm. The enzyme catalyses (R)-pantothenate + ATP = (R)-4'-phosphopantothenate + ADP + H(+). It functions in the pathway cofactor biosynthesis; coenzyme A biosynthesis; CoA from (R)-pantothenate: step 1/5. Catalyzes the phosphorylation of pantothenate (Pan), the first step in CoA biosynthesis. The protein is Type II pantothenate kinase of Staphylococcus aureus (strain USA300).